Here is a 312-residue protein sequence, read N- to C-terminus: GTP cyclohydrolase MptA (312 aa).

It belongs to the GTP cyclohydrolase IV family. In terms of assembly, homodimer. It depends on Fe(2+) as a cofactor.

It catalyses the reaction GTP + H2O = 7,8-dihydroneopterin 2',3'-cyclic phosphate + formate + diphosphate + H(+). Its pathway is cofactor biosynthesis; 5,6,7,8-tetrahydromethanopterin biosynthesis. Its function is as follows. Converts GTP to 7,8-dihydro-D-neopterin 2',3'-cyclic phosphate, the first intermediate in the biosynthesis of coenzyme methanopterin. This chain is GTP cyclohydrolase MptA, found in Methanococcus vannielii (strain ATCC 35089 / DSM 1224 / JCM 13029 / OCM 148 / SB).